A 421-amino-acid polypeptide reads, in one-letter code: F-box protein At2g17690 (421 aa).

Residues 2-50 (GDWSKLPEELLGLIALRLYSVIELIRFRSICKSWRSSASGVNKNHSLSS) form the F-box domain.

Its function is as follows. Involved in heat stress response. Contributes to recovery from heat stress. The protein is F-box protein At2g17690 of Arabidopsis thaliana (Mouse-ear cress).